Reading from the N-terminus, the 516-residue chain is DNA-(apurinic or apyrimidinic site) endonuclease 2 (516 aa).

Mg(2+)-binding residues include Asn-8 and Glu-47. Tyr-155 is a catalytic residue. Asp-196, Asn-198, Asp-302, and His-303 together coordinate Mg(2+). Catalysis depends on Asp-196, which acts as the Proton donor/acceptor. Catalysis depends on His-303, which acts as the Proton acceptor. A compositionally biased stretch (polar residues) spans 357–366 (QPSHQIQAQR). Positions 357-389 (QPSHQIQAQRQPRKACMHSTRLRKSQGGPKRKQ) are disordered. Positions 367 to 389 (QPRKACMHSTRLRKSQGGPKRKQ) are enriched in basic residues. Lys-370 participates in a covalent cross-link: Glycyl lysine isopeptide (Lys-Gly) (interchain with G-Cter in ubiquitin). The interval 389–396 (QKNLMSYF) is required for the interaction and colocalization with PCNA in nuclear foci in presence of oxidative-induced DNA damaging agents. 4 residues coordinate Zn(2+): Cys-467, His-470, Cys-493, and Cys-507. The GRF-type zinc-finger motif lies at 467 to 516 (CGGHREPCVMRTVKKTGPNFGRQFYMCARPRGPPSDPSSRCNFFLWSRPS).

This sequence belongs to the DNA repair enzymes AP/ExoA family. Interacts with PCNA. This interaction is increased by misincorporation of uracil in nuclear DNA. The cofactor is Mg(2+). It depends on Mn(2+) as a cofactor. In terms of processing, ubiquitinated by the CUL9-RBX1 complex. Ubiquitinated by MKRN3 at Lys-370 leading to proteasomal degradation. As to expression, expressed in lymphocytes, thymocytes and splenocytes (at protein level). Highly expressed in the thymus and weakly expressed in the bone marrow, spleen, eye, kidney, lung, brain and uterus.

The protein resides in the nucleus. The protein localises to the cytoplasm. Its subcellular location is the mitochondrion. It catalyses the reaction Exonucleolytic cleavage in the 3'- to 5'-direction to yield nucleoside 5'-phosphates.. With respect to regulation, 3'-5' exonuclease activity is activated by sodium and manganese. 3'-5' exonuclease and 3'-phosphodiesterase activities are stimulated in presence of PCNA. Functions as a weak apurinic/apyrimidinic (AP) endodeoxyribonuclease in the DNA base excision repair (BER) pathway of DNA lesions induced by oxidative and alkylating agents. Initiates repair of AP sites in DNA by catalyzing hydrolytic incision of the phosphodiester backbone immediately adjacent to the damage, generating a single-strand break with 5'-deoxyribose phosphate and 3'-hydroxyl ends. Also displays double-stranded DNA 3'-5' exonuclease, 3'-phosphodiesterase activities. Shows robust 3'-5' exonuclease activity on 3'-recessed heteroduplex DNA and is able to remove mismatched nucleotides preferentially. Shows fairly strong 3'-phosphodiesterase activity involved in the removal of 3'-damaged termini formed in DNA by oxidative agents. In the nucleus functions in the PCNA-dependent BER pathway. Plays a role in reversing blocked 3' DNA ends, problematic lesions that preclude DNA synthesis. Required for somatic hypermutation (SHM) and DNA cleavage step of class switch recombination (CSR) of immunoglobulin genes. Required for proper cell cycle progression during proliferation of peripheral lymphocytes. The sequence is that of DNA-(apurinic or apyrimidinic site) endonuclease 2 (Apex2) from Mus musculus (Mouse).